Here is a 132-residue protein sequence, read N- to C-terminus: ATP synthase epsilon chain, chloroplastic (132 aa).

It belongs to the ATPase epsilon chain family. In terms of assembly, F-type ATPases have 2 components, CF(1) - the catalytic core - and CF(0) - the membrane proton channel. CF(1) has five subunits: alpha(3), beta(3), gamma(1), delta(1), epsilon(1). CF(0) has three main subunits: a, b and c.

It localises to the plastid. It is found in the chloroplast thylakoid membrane. Functionally, produces ATP from ADP in the presence of a proton gradient across the membrane. In Calycanthus floridus var. glaucus (Eastern sweetshrub), this protein is ATP synthase epsilon chain, chloroplastic.